A 351-amino-acid polypeptide reads, in one-letter code: Phosphoribosylformylglycinamidine cyclo-ligase (351 aa).

This sequence belongs to the AIR synthase family.

Its subcellular location is the cytoplasm. It carries out the reaction 2-formamido-N(1)-(5-O-phospho-beta-D-ribosyl)acetamidine + ATP = 5-amino-1-(5-phospho-beta-D-ribosyl)imidazole + ADP + phosphate + H(+). The protein operates within purine metabolism; IMP biosynthesis via de novo pathway; 5-amino-1-(5-phospho-D-ribosyl)imidazole from N(2)-formyl-N(1)-(5-phospho-D-ribosyl)glycinamide: step 2/2. The polypeptide is Phosphoribosylformylglycinamidine cyclo-ligase (Burkholderia cenocepacia (strain HI2424)).